The following is a 266-amino-acid chain: Norfluorocurarine synthase 1 (266 aa).

One can recognise an AB hydrolase-1 domain in the interval 11–121; that stretch reads HFVLVHGAGH…VMPDAVNPPS (111 aa). Residues S86, D216, and H244 contribute to the active site.

Belongs to the AB hydrolase superfamily. In terms of assembly, homodimer.

The enzyme catalyses 17-dehydropreakuammicine + H2O = norfluorocurarine + methanol + CO2. It participates in alkaloid biosynthesis. Functionally, hydrolase involved in the biosynthesis of curare monoterpene indole alkaloids (MIAs), natural products such as diaboline, a pharmacologically active compound used to regulate blood pressure. Curare alkaloids act as animal glycine receptor antagonists. Catalyzes the conversion of dehydropreakuammicine to norfluorocurarine. The sequence is that of Norfluorocurarine synthase 1 from Strychnos sp.